A 459-amino-acid polypeptide reads, in one-letter code: Cysteine--tRNA ligase (459 aa).

Zn(2+) is bound at residue cysteine 31. A 'HIGH' region motif is present at residues 33-43; it reads PTVYDNPHIGN. Zn(2+) is bound by residues cysteine 216, histidine 241, and glutamate 245. Positions 274–278 match the 'KMSKS' region motif; sequence KMSKS. ATP is bound at residue lysine 277.

The protein belongs to the class-I aminoacyl-tRNA synthetase family. In terms of assembly, monomer. Zn(2+) serves as cofactor.

Its subcellular location is the cytoplasm. The catalysed reaction is tRNA(Cys) + L-cysteine + ATP = L-cysteinyl-tRNA(Cys) + AMP + diphosphate. The polypeptide is Cysteine--tRNA ligase (Rickettsia canadensis (strain McKiel)).